Reading from the N-terminus, the 185-residue chain is Ribosome-recycling factor (185 aa).

It belongs to the RRF family.

It is found in the cytoplasm. Its function is as follows. Responsible for the release of ribosomes from messenger RNA at the termination of protein biosynthesis. May increase the efficiency of translation by recycling ribosomes from one round of translation to another. The sequence is that of Ribosome-recycling factor from Kocuria rhizophila (strain ATCC 9341 / DSM 348 / NBRC 103217 / DC2201).